The following is a 444-amino-acid chain: Tubulin beta-2 chain (444 aa).

GTP-binding residues include Gln-11, Glu-69, Ser-138, Gly-142, Thr-143, Gly-144, Asn-204, and Asn-226. Residue Glu-69 coordinates Mg(2+). The tract at residues 422–444 (YQQYQDATAEEDDYDDGEGSTGD) is disordered. The segment covering 429-444 (TAEEDDYDDGEGSTGD) has biased composition (acidic residues).

This sequence belongs to the tubulin family. In terms of assembly, dimer of alpha and beta chains. A typical microtubule is a hollow water-filled tube with an outer diameter of 25 nm and an inner diameter of 15 nM. Alpha-beta heterodimers associate head-to-tail to form protofilaments running lengthwise along the microtubule wall with the beta-tubulin subunit facing the microtubule plus end conferring a structural polarity. Microtubules usually have 13 protofilaments but different protofilament numbers can be found in some organisms and specialized cells. Requires Mg(2+) as cofactor. In terms of tissue distribution, found in areas of rapidly dividing tissues.

It is found in the cytoplasm. The protein resides in the cytoskeleton. In terms of biological role, tubulin is the major constituent of microtubules, a cylinder consisting of laterally associated linear protofilaments composed of alpha- and beta-tubulin heterodimers. Microtubules grow by the addition of GTP-tubulin dimers to the microtubule end, where a stabilizing cap forms. Below the cap, tubulin dimers are in GDP-bound state, owing to GTPase activity of alpha-tubulin. This chain is Tubulin beta-2 chain (TUBB2), found in Daucus carota (Wild carrot).